Here is a 1102-residue protein sequence, read N- to C-terminus: PAN2-PAN3 deadenylation complex catalytic subunit PAN2 (1102 aa).

3 WD repeats span residues Asp-20–Ala-59, Asp-104–Gln-144, and Asn-269–Asp-308. Residues Asp-308–Pro-445 form a linker region. Residues Ala-423–Ser-442 are disordered. The USP domain maps to Glu-446–Lys-833. Residues Val-881–Tyr-1054 enclose the Exonuclease domain. Asp-884, Glu-886, Asp-993, and Asp-1046 together coordinate a divalent metal cation.

This sequence belongs to the peptidase C19 family. PAN2 subfamily. In terms of assembly, forms a heterotrimer with an asymmetric homodimer of the regulatory subunit PAN3 to form the poly(A)-nuclease (PAN) deadenylation complex. The cofactor is a divalent metal cation.

The protein resides in the cytoplasm. It catalyses the reaction Exonucleolytic cleavage of poly(A) to 5'-AMP.. Positively regulated by the regulatory subunit PAN3. Catalytic subunit of the poly(A)-nuclease (PAN) deadenylation complex, one of two cytoplasmic mRNA deadenylases involved in mRNA turnover. PAN specifically shortens poly(A) tails of RNA and the activity is stimulated by poly(A)-binding protein PAB1. PAN deadenylation is followed by rapid degradation of the shortened mRNA tails by the CCR4-NOT complex. Deadenylated mRNAs are then degraded by two alternative mechanisms, namely exosome-mediated 3'-5' exonucleolytic degradation, or deadenylation-dependent mRNA decaping and subsequent 5'-3' exonucleolytic degradation by XRN1. May also be involved in post-transcriptional maturation of mRNA poly(A) tails. In Chaetomium globosum (strain ATCC 6205 / CBS 148.51 / DSM 1962 / NBRC 6347 / NRRL 1970) (Soil fungus), this protein is PAN2-PAN3 deadenylation complex catalytic subunit PAN2.